Reading from the N-terminus, the 96-residue chain is MAGFRKENDEVWLDVYIQPKASRDQIQGWHGEELKIAITAPPVDGQANAHLIKFLAKQFKVAKSQIVIHKGELGRHKTVRITSPQQLPAILDQSAD.

Belongs to the UPF0235 family.

The sequence is that of UPF0235 protein Tola_0962 from Tolumonas auensis (strain DSM 9187 / NBRC 110442 / TA 4).